Here is a 95-residue protein sequence, read N- to C-terminus: uncharacterized protein (95 aa).

2 consecutive repeat copies span residues 67–74 and 85–92. Positions 67–92 are 2 X 8 AA approximate repeats; it reads GCGCGCGCATVAAVSPVPCGGCCGCG.

This is an uncharacterized protein from Caenorhabditis elegans.